Reading from the N-terminus, the 373-residue chain is Leucine aminopeptidase 1 (373 aa).

An N-terminal signal peptide occupies residues 1-18 (MKFISVLALGATATSVLG). Residues His-176 and Asp-195 each contribute to the Zn(2+) site. Asn-196 carries N-linked (GlcNAc...) asparagine glycosylation. Zn(2+) is bound by residues Glu-234 and Asp-261. Asn-286 is a glycosylation site (N-linked (GlcNAc...) asparagine). A disulfide bond links Cys-310 and Cys-314. A Zn(2+)-binding site is contributed by His-343.

The protein belongs to the peptidase M28 family. M28E subfamily. Monomer. It depends on Zn(2+) as a cofactor.

It is found in the secreted. In terms of biological role, extracellular aminopeptidase which contributes to pathogenicity. The sequence is that of Leucine aminopeptidase 1 (LAP1) from Arthroderma otae (strain ATCC MYA-4605 / CBS 113480) (Microsporum canis).